The sequence spans 642 residues: MIVVFRHESTIGHVFLTGGDYHSGAGGFSRAPSTAVTYVAPWLRTSQFPGGDRGLSGGGQRGRLWAYGPGYVEGIYVPPYQQAYTTELRTTCTCTPSRSRPGQVFTTCRSAIHPCAGPRVDSCVQHAGCVRQTTRGDKRKLNMSDSPKNAQKVTDEADVVLVGAGIMSATLGAMLRQLEPSWSQVIFERLDGAAQESSSPWNNAGTGHSALCELNYTPEKNGKIDISKAVNINEKFQVSRQFWAHQVEEGILPDPKEFINAVPHVSFGHGADQVAYIKNRYNALKDHPLFPGMQYADDEETFTEKLPLMAQGRDFSDPVAISWIQEGTDINYGSQSKQFLKAAEAGGTEIRYGHEVKDITKDGAKWKVTVKNVHTGDTQTIRANFVFVGAGGMALPLLQKSGIAEIRGFGGFPVSGQWLRCTNEELIEQHAAKVYGKASVGAPPMSVPHLDTRVIDGEKGLLFGPYAGWTPKFLKEGSNLDLFSSLRPTNLASLLGVGVQEMGLTKYLITEVVKDMEARMESLREYMPNAKKSDWELITAGQRVQVIKPVGAPRFGSLEFGTTLISNSEGTIAGLLGASPGASIAPAAMIELLERCFGKRMIEWGDKIQEMVPSYGKKLADEPEMFAELWEYTQKTLKLEKA.

The interval 1-142 (MIVVFRHEST…TTRGDKRKLN (142 aa)) is unknown. Residues 143–642 (MSDSPKNAQK…TQKTLKLEKA (500 aa)) form an MQO domain region.

It in the C-terminal section; belongs to the MQO family. It depends on FAD as a cofactor.

The catalysed reaction is (S)-malate + a quinone = a quinol + oxaloacetate. Its pathway is carbohydrate metabolism; tricarboxylic acid cycle; oxaloacetate from (S)-malate (quinone route): step 1/1. This is Probable malate:quinone oxidoreductase (mqo) from Corynebacterium efficiens (strain DSM 44549 / YS-314 / AJ 12310 / JCM 11189 / NBRC 100395).